A 901-amino-acid chain; its full sequence is Alpha-actinin-3 (901 aa).

An N-acetylmethionine modification is found at M1. Residues 1–261 (MMMVMQPEGL…IMTYVSCFYH (261 aa)) are actin-binding. Calponin-homology (CH) domains lie at 45-149 (KQQR…LRFA) and 158-264 (TSAK…HAFA). Spectrin repeat units lie at residues 288–398 (KLME…WLLS), 408–513 (HLAE…ALER), 523–634 (RLQL…TLQE), and 644–747 (RLRR…EVEN). EF-hand domains follow at residues 760–795 (EQLN…MGYD) and 796–831 (LGEV…ETAE). 6 residues coordinate Ca(2+): D773, N777, M779, D784, D809, and N811.

This sequence belongs to the alpha-actinin family. In terms of assembly, homodimer; antiparallel. Also forms heterodimers with ACTN2. Interacts with MYOZ1. In terms of tissue distribution, expression restricted to fast (type 2) skeletal muscle fibers (at protein level).

F-actin cross-linking protein which is thought to anchor actin to a variety of intracellular structures. This is a bundling protein. The protein is Alpha-actinin-3 (ACTN3) of Homo sapiens (Human).